The primary structure comprises 590 residues: Guanylate-binding protein 5 (590 aa).

Positions 1-306 (MAPEIHMPEP…LTYVDAINSG (306 aa)) are NLRP3-binding. The segment at 1–310 (MAPEIHMPEP…DAINSGALPS (310 aa)) is GTPase domain (Globular). The region spanning 35–277 (TQPVVVVAIV…FCSHIFTQSK (243 aa)) is the GB1/RHD3-type G domain. GTP is bound by residues 45–52 (GLYRTGKS), 67–69 (VGS), 182–183 (RD), and leucine 246. The interval 529-590 (QIALEKARVA…RRHHHDCVIS (62 aa)) is required for tetramerization, but not for dimerization. Cysteine methyl ester is present on cysteine 587. Cysteine 587 is lipidated: S-geranylgeranyl cysteine. The propeptide at 588 to 590 (VIS) is removed in mature form.

It belongs to the TRAFAC class dynamin-like GTPase superfamily. GB1/RHD3 GTPase family. GB1 subfamily. In terms of assembly, homodimer; homodimerizes upon GTP-binding, forming a close face-to-face dimer. Heterodimer with other family members, including GBP1, GBP2, GBP3 and GBP4. May also form tetramers (dimer of dimers) in the presence of GTP. Interacts with NLRP3, possibly in its tetrameric form, and promotes PYCARD/ASC polymerization. Post-translationally, isoprenylation is required for proper subcellular location. Low expression, if any, in many tissues in the absence of stimulation.

The protein resides in the cytoplasmic vesicle membrane. It is found in the golgi apparatus membrane. It localises to the cytoplasm. It carries out the reaction GTP + H2O = GDP + phosphate + H(+). Functionally, interferon (IFN)-inducible GTPase that plays important roles in innate immunity against a diverse range of bacterial, viral and protozoan pathogens. Hydrolyzes GTP, but in contrast to other family members, does not produce GMP. Following infection, recruited to the pathogen-containing vacuoles or vacuole-escaped bacteria and acts as a positive regulator of inflammasome assembly by promoting the release of inflammasome ligands from bacteria. Acts by promoting lysis of pathogen-containing vacuoles, releasing pathogens into the cytosol. Following pathogen release in the cytosol, promotes recruitment of proteins that mediate bacterial cytolysis, such as Gm12250/Irgb10: this liberates ligands that are detected by inflammasomes, such as lipopolysaccharide (LPS) that activates the non-canonical CASP4/CASP11 inflammasome or double-stranded DNA (dsDNA) that activates the AIM2 inflammasome. As an activator of NLRP3 inflammasome assembly: promotes selective NLRP3 inflammasome assembly in response to microbial and soluble, but not crystalline, agents. Independently of its GTPase activity, acts as an inhibitor of various viruses infectivity by inhibiting FURIN-mediated maturation of viral envelope proteins. The polypeptide is Guanylate-binding protein 5 (Mus musculus (Mouse)).